A 372-amino-acid polypeptide reads, in one-letter code: Cytochrome b (372 aa).

4 helical membrane-spanning segments follow: residues 25–45 (FGSM…FLAI), 69–90 (WIMQ…YTHI), 105–125 (WLSG…GYVL), and 170–190 (FFAL…IHIM). Heme b contacts are provided by His75 and His89. Residues His174 and His188 each coordinate heme b. His193 contributes to the a ubiquinone binding site. Transmembrane regions (helical) follow at residues 218-238 (YKDM…MSFM), 280-300 (LGGT…PFTH), 312-332 (ITQV…WTAT), and 339-358 (FILI…IIHP).

This sequence belongs to the cytochrome b family. In terms of assembly, the cytochrome bc1 complex contains 3 respiratory subunits (MT-CYB, CYC1 and UQCRFS1), 2 core proteins (UQCRC1 and UQCRC2) and probably 6 low-molecular weight proteins. Heme b serves as cofactor.

Its subcellular location is the mitochondrion inner membrane. Functionally, component of the ubiquinol-cytochrome c reductase complex (complex III or cytochrome b-c1 complex) that is part of the mitochondrial respiratory chain. The b-c1 complex mediates electron transfer from ubiquinol to cytochrome c. Contributes to the generation of a proton gradient across the mitochondrial membrane that is then used for ATP synthesis. The chain is Cytochrome b (MT-CYB) from Pseudechis australis (Mulga snake).